We begin with the raw amino-acid sequence, 612 residues long: UvrABC system protein C (612 aa).

Residues 20–98 enclose the GIY-YIG domain; that stretch reads THSGVYRMLD…IKQHRPKYNI (79 aa). Positions 208–243 constitute a UVR domain; that stretch reads SSVLEEISAKMYQASEDMEYEKAQVYRDQLVVLRKL.

The protein belongs to the UvrC family. Interacts with UvrB in an incision complex.

It localises to the cytoplasm. In terms of biological role, the UvrABC repair system catalyzes the recognition and processing of DNA lesions. UvrC both incises the 5' and 3' sides of the lesion. The N-terminal half is responsible for the 3' incision and the C-terminal half is responsible for the 5' incision. This chain is UvrABC system protein C, found in Francisella tularensis subsp. mediasiatica (strain FSC147).